Reading from the N-terminus, the 161-residue chain is Ribonuclease H (161 aa).

Residues 1 to 142 (MLKLVKMFSD…CDKIARQSAQ (142 aa)) enclose the RNase H type-1 domain. Positions 10, 48, 70, and 134 each coordinate Mg(2+).

It belongs to the RNase H family. As to quaternary structure, monomer. The cofactor is Mg(2+).

The protein localises to the cytoplasm. The catalysed reaction is Endonucleolytic cleavage to 5'-phosphomonoester.. Functionally, endonuclease that specifically degrades the RNA of RNA-DNA hybrids. This chain is Ribonuclease H (rnhA), found in Buchnera aphidicola subsp. Schizaphis graminum (strain Sg).